We begin with the raw amino-acid sequence, 241 residues long: tRNA (guanine-N(7)-)-methyltransferase B (241 aa).

S-adenosyl-L-methionine is bound by residues glycine 61, glutamate 84, arginine 86, asparagine 117, alanine 118, and leucine 137. Aspartate 140 is a catalytic residue. The segment at 141–149 (PHFKKTKHK) is alphaC helix. Residues threonine 215 and glutamate 217 each contribute to the S-adenosyl-L-methionine site. Residues 215-223 (TEEGKKVQR) form an alpha6 helix region.

Belongs to the class I-like SAM-binding methyltransferase superfamily. TrmB family. In terms of assembly, catalytic component of the METTL1-WDR4 complex, composed of mettl1 and wdr4.

Its subcellular location is the nucleus. It carries out the reaction guanosine(46) in tRNA + S-adenosyl-L-methionine = N(7)-methylguanosine(46) in tRNA + S-adenosyl-L-homocysteine. The enzyme catalyses a guanosine in mRNA + S-adenosyl-L-methionine = an N(7)-methylguanosine in mRNA + S-adenosyl-L-homocysteine. It catalyses the reaction a guanosine in miRNA + S-adenosyl-L-methionine = an N(7)-methylguanosine in miRNA + S-adenosyl-L-homocysteine. It functions in the pathway tRNA modification; N(7)-methylguanine-tRNA biosynthesis. In terms of biological role, catalytic component of METTL1-WDR4 methyltransferase complex that mediates the formation of N(7)-methylguanine in a subset of RNA species, such as tRNAs, mRNAs and microRNAs (miRNAs). Catalyzes the formation of N(7)-methylguanine at position 46 (m7G46) in a large subset of tRNAs that contain the 5'-RAGGU-3' motif within the variable loop. M7G46 interacts with C13-G22 in the D-loop to stabilize tRNA tertiary structure and protect tRNAs from decay. Also acts as a methyltransferase for a subset of internal N(7)-methylguanine in mRNAs. Internal N(7)-methylguanine methylation of mRNAs in response to stress promotes their relocalization to stress granules, thereby suppressing their translation. Also methylates a specific subset of miRNAs. In Xenopus tropicalis (Western clawed frog), this protein is tRNA (guanine-N(7)-)-methyltransferase B (mettl1-B).